A 1103-amino-acid polypeptide reads, in one-letter code: Platelet-derived growth factor receptor beta (1103 aa).

Positions 1–31 are cleaved as a signal peptide; the sequence is MQVPGTMPAPVLKGQALWLPLLLMLSPQASG. Ig-like C2-type domains are found at residues 33–120, 129–210, 214–309, 331–403, and 416–524; these read LVIT…YIFV, PVDP…YSLQ, INVS…INVT, HRSR…HEDA, and PVRV…VTVV. Residues 33 to 532 are Extracellular-facing; the sequence is LVITPPGPEL…VVPHSLPFKV (500 aa). N-linked (GlcNAc...) asparagine glycosylation is found at N45 and N89. 2 disulfides stabilise this stretch: C54–C100 and C149–C190. N215 and N230 each carry an N-linked (GlcNAc...) asparagine glycan. Cysteines 235 and 291 form a disulfide. N-linked (GlcNAc...) asparagine glycosylation is found at N292, N307, N354, N371, N468, and N479. C436 and C508 form a disulfide bridge. The helical transmembrane segment at 533–553 threads the bilayer; sequence VVISAILALVVLTIISLIILI. The Cytoplasmic portion of the chain corresponds to 554–1103; that stretch reads MLWQKKPRYE…PRAEAEDSFL (550 aa). A phosphotyrosine; by autocatalysis mark is found at Y562, Y579, and Y581. The Protein kinase domain maps to 600–962; that stretch reads LVLGRTLGSG…QLVLLLERLL (363 aa). Residues 606 to 614 and K634 contribute to the ATP site; that span reads LGSGAFGQV. Y686 is modified (phosphotyrosine; by ABL1 and ABL2). Y716, Y740, Y751, Y763, Y771, Y775, and Y778 each carry phosphotyrosine; by autocatalysis. D826 functions as the Proton acceptor in the catalytic mechanism. Position 857 is a phosphotyrosine; by autocatalysis (Y857). Phosphotyrosine; by ABL1 and ABL2 is present on residues Y934 and Y970. Y1009 and Y1021 each carry phosphotyrosine; by autocatalysis. A disordered region spans residues 1017–1103; it reads GDNDYIIPLP…PRAEAEDSFL (87 aa). A compositionally biased stretch (polar residues) spans 1039–1059; it reads SSPSLASSTLNEVNTSSTISC. Residues 1065–1075 are compositionally biased toward acidic residues; it reads PQEEPEPEPEP. The span at 1076–1086 shows a compositional bias: pro residues; the sequence is QPEPQVVPEPP.

It belongs to the protein kinase superfamily. Tyr protein kinase family. CSF-1/PDGF receptor subfamily. Interacts with homodimeric PDGFB and PDGFD, and with heterodimers formed by PDGFA and PDGFB. May also interact with homodimeric PDGFC. Monomer in the absence of bound ligand. Interaction with homodimeric PDGFB, heterodimers formed by PDGFA and PDGFB or homodimeric PDGFD, leads to receptor dimerization, where both PDGFRA homodimers and heterodimers with PDGFRB are observed. Interacts with SH2B2/APS. Interacts directly (tyrosine phosphorylated) with SHB. Interacts (tyrosine phosphorylated) with PIK3R1 and RASA1. Interacts (tyrosine phosphorylated) with CBL. Interacts (tyrosine phosphorylated) with SRC and SRC family kinases. Interacts (tyrosine phosphorylated) with PIK3C2B, maybe indirectly. Interacts (tyrosine phosphorylated) with SHC1, GRB7, GRB10 and NCK1. Interaction with GRB2 is mediated by SHC1. Interacts (via C-terminus) with NHERF1. In terms of processing, N-glycosylated. Ubiquitinated. After autophosphorylation, the receptor is polyubiquitinated, leading to its degradation. Post-translationally, autophosphorylated on tyrosine residues upon ligand binding. Autophosphorylation occurs in trans, i.e. one subunit of the dimeric receptor phosphorylates tyrosine residues on the other subunit. Phosphorylation at Tyr-579, and to a lesser degree, Tyr-581 is important for interaction with SRC. Phosphorylation at Tyr-716 is important for interaction with GRB2. Phosphorylation at Tyr-740 and Tyr-751 is important for interaction with PIK3R1. Phosphorylation at Tyr-751 is important for interaction with NCK1. Phosphorylation at Tyr-771 and Tyr-857 is important for interaction with RASA1/GAP. Phosphorylation at Tyr-857 is important for efficient phosphorylation of PLCG1 and PTPN11, resulting in increased phosphorylation of AKT1, MAPK1/ERK2 and/or MAPK3/ERK1, PDCD6IP/ALIX and STAM, and in increased cell proliferation. Phosphorylation at Tyr-1009 is important for interaction with PTPN11. Phosphorylation at Tyr-1009 and Tyr-1021 is important for interaction with PLCG1. Dephosphorylated by PTPRJ at Tyr-751, Tyr-857, Tyr-1009 and Tyr-1021. Dephosphorylated by PTPN2 at Tyr-579 and Tyr-1021.

It localises to the cell membrane. The protein localises to the cytoplasmic vesicle. The protein resides in the lysosome lumen. It catalyses the reaction L-tyrosyl-[protein] + ATP = O-phospho-L-tyrosyl-[protein] + ADP + H(+). With respect to regulation, present in an inactive conformation in the absence of bound ligand. Binding of PDGFB and/or PDGFD leads to dimerization and activation by autophosphorylation on tyrosine residues. Tyrosine-protein kinase that acts as a cell-surface receptor for homodimeric PDGFB and PDGFD and for heterodimers formed by PDGFA and PDGFB, and plays an essential role in the regulation of embryonic development, cell proliferation, survival, differentiation, chemotaxis and migration. Plays an essential role in blood vessel development by promoting proliferation, migration and recruitment of pericytes and smooth muscle cells to endothelial cells. Plays a role in the migration of vascular smooth muscle cells and the formation of neointima at vascular injury sites. Required for normal development of the cardiovascular system. Required for normal recruitment of pericytes (mesangial cells) in the kidney glomerulus, and for normal formation of a branched network of capillaries in kidney glomeruli. Promotes rearrangement of the actin cytoskeleton and the formation of membrane ruffles. Binding of its cognate ligands - homodimeric PDGFB, heterodimers formed by PDGFA and PDGFB or homodimeric PDGFD -leads to the activation of several signaling cascades; the response depends on the nature of the bound ligand and is modulated by the formation of heterodimers between PDGFRA and PDGFRB. Phosphorylates PLCG1, PIK3R1, PTPN11, RASA1/GAP, CBL, SHC1 and NCK1. Activation of PLCG1 leads to the production of the cellular signaling molecules diacylglycerol and inositol 1,4,5-trisphosphate, mobilization of cytosolic Ca(2+) and the activation of protein kinase C. Phosphorylation of PIK3R1, the regulatory subunit of phosphatidylinositol 3-kinase, leads to the activation of the AKT1 signaling pathway. Phosphorylation of SHC1, or of the C-terminus of PTPN11, creates a binding site for GRB2, resulting in the activation of HRAS, RAF1 and down-stream MAP kinases, including MAPK1/ERK2 and/or MAPK3/ERK1. Promotes phosphorylation and activation of SRC family kinases. Promotes phosphorylation of PDCD6IP/ALIX and STAM. Receptor signaling is down-regulated by protein phosphatases that dephosphorylate the receptor and its down-stream effectors, and by rapid internalization of the activated receptor. The protein is Platelet-derived growth factor receptor beta (PDGFRB) of Canis lupus familiaris (Dog).